Consider the following 328-residue polypeptide: Formyltetrahydrofolate deformylase 2, mitochondrial (328 aa).

The transit peptide at 1–12 (MIRRVSTTSCLS) directs the protein to the mitochondrion. One can recognise an ACT domain in the interval 46–129 (FHVFHCPDVV…SVVRVPSLDP (84 aa)). Residue Asp-272 is part of the active site.

This sequence belongs to the PurU family. In terms of tissue distribution, expressed in leaves, cotyledons, roots, seeds and flowers.

It is found in the mitochondrion. It catalyses the reaction (6R)-10-formyltetrahydrofolate + H2O = (6S)-5,6,7,8-tetrahydrofolate + formate + H(+). In terms of biological role, deformylase involved in photorespiration. Prevents excessive accumulation of 5-formyl tetrahydrofolate (THF), a potent inhibitor of the Gly decarboxylase/Ser hydroxymethyltransferase complex. The sequence is that of Formyltetrahydrofolate deformylase 2, mitochondrial (PURU2) from Arabidopsis thaliana (Mouse-ear cress).